A 673-amino-acid polypeptide reads, in one-letter code: DNA ligase (673 aa).

NAD(+) contacts are provided by residues 32 to 36 (DHVYD), 81 to 82 (SL), and E111. K113 functions as the N6-AMP-lysine intermediate in the catalytic mechanism. NAD(+)-binding residues include R134, E171, K286, and K310. The Zn(2+) site is built by C404, C407, C422, and C428. Positions 595-673 (NIIDEYKNKT…NEFWKKDNNF (79 aa)) constitute a BRCT domain.

It belongs to the NAD-dependent DNA ligase family. LigA subfamily. Requires Mg(2+) as cofactor. The cofactor is Mn(2+).

It catalyses the reaction NAD(+) + (deoxyribonucleotide)n-3'-hydroxyl + 5'-phospho-(deoxyribonucleotide)m = (deoxyribonucleotide)n+m + AMP + beta-nicotinamide D-nucleotide.. Functionally, DNA ligase that catalyzes the formation of phosphodiester linkages between 5'-phosphoryl and 3'-hydroxyl groups in double-stranded DNA using NAD as a coenzyme and as the energy source for the reaction. It is essential for DNA replication and repair of damaged DNA. This is DNA ligase from Ureaplasma parvum serovar 3 (strain ATCC 27815 / 27 / NCTC 11736).